A 279-amino-acid polypeptide reads, in one-letter code: Ribosomal RNA small subunit methyltransferase J (279 aa).

S-adenosyl-L-methionine is bound by residues 138 to 139 (ER) and Asp-194.

This sequence belongs to the methyltransferase superfamily. RsmJ family.

It is found in the cytoplasm. It catalyses the reaction guanosine(1516) in 16S rRNA + S-adenosyl-L-methionine = N(2)-methylguanosine(1516) in 16S rRNA + S-adenosyl-L-homocysteine + H(+). Specifically methylates the guanosine in position 1516 of 16S rRNA. The sequence is that of Ribosomal RNA small subunit methyltransferase J from Acinetobacter baumannii (strain SDF).